The following is a 120-amino-acid chain: NADH-quinone oxidoreductase subunit A (120 aa).

Transmembrane regions (helical) follow at residues 10–30 (ILVFLGISLFIAVLALTMGWF), 65–85 (VAILFIIFDLETAFLFPWAVV), and 89–109 (IGWFGFWAMMVFLAILVVGFI).

Belongs to the complex I subunit 3 family. As to quaternary structure, NDH-1 is composed of 14 different subunits. Subunits NuoA, H, J, K, L, M, N constitute the membrane sector of the complex.

It is found in the cell inner membrane. The catalysed reaction is a quinone + NADH + 5 H(+)(in) = a quinol + NAD(+) + 4 H(+)(out). Its function is as follows. NDH-1 shuttles electrons from NADH, via FMN and iron-sulfur (Fe-S) centers, to quinones in the respiratory chain. The immediate electron acceptor for the enzyme in this species is believed to be ubiquinone. Couples the redox reaction to proton translocation (for every two electrons transferred, four hydrogen ions are translocated across the cytoplasmic membrane), and thus conserves the redox energy in a proton gradient. The sequence is that of NADH-quinone oxidoreductase subunit A from Coxiella burnetii (strain Dugway 5J108-111).